Consider the following 281-residue polypeptide: Pantothenate synthetase (281 aa).

Residue Met30 to His37 coordinates ATP. The Proton donor role is filled by His37. Position 61 (Gln61) interacts with (R)-pantoate. A beta-alanine-binding site is contributed by Gln61. Position 149 to 152 (Gly149 to Asp152) interacts with ATP. Residue Gln155 participates in (R)-pantoate binding. Residues Ile178 and Met186 to Arg189 each bind ATP.

The protein belongs to the pantothenate synthetase family. In terms of assembly, homodimer.

The protein localises to the cytoplasm. It carries out the reaction (R)-pantoate + beta-alanine + ATP = (R)-pantothenate + AMP + diphosphate + H(+). The protein operates within cofactor biosynthesis; (R)-pantothenate biosynthesis; (R)-pantothenate from (R)-pantoate and beta-alanine: step 1/1. Functionally, catalyzes the condensation of pantoate with beta-alanine in an ATP-dependent reaction via a pantoyl-adenylate intermediate. This Shewanella woodyi (strain ATCC 51908 / MS32) protein is Pantothenate synthetase.